Consider the following 440-residue polypeptide: Ribulose bisphosphate carboxylase large chain (440 aa).

Lys4 bears the N6,N6,N6-trimethyllysine mark. The substrate site is built by Asn113 and Thr163. The Proton acceptor role is filled by Lys165. Residue Lys167 coordinates substrate. Residues Lys191, Asp193, and Glu194 each contribute to the Mg(2+) site. The residue at position 191 (Lys191) is an N6-carboxylysine. The Proton acceptor role is filled by His284. Substrate-binding residues include Arg285, His317, and Ser369.

It belongs to the RuBisCO large chain family. Type I subfamily. In terms of assembly, heterohexadecamer of 8 large chains and 8 small chains; disulfide-linked. The disulfide link is formed within the large subunit homodimers. Requires Mg(2+) as cofactor. In terms of processing, the disulfide bond which can form in the large chain dimeric partners within the hexadecamer appears to be associated with oxidative stress and protein turnover.

It is found in the plastid. It localises to the chloroplast. The enzyme catalyses 2 (2R)-3-phosphoglycerate + 2 H(+) = D-ribulose 1,5-bisphosphate + CO2 + H2O. It carries out the reaction D-ribulose 1,5-bisphosphate + O2 = 2-phosphoglycolate + (2R)-3-phosphoglycerate + 2 H(+). Functionally, ruBisCO catalyzes two reactions: the carboxylation of D-ribulose 1,5-bisphosphate, the primary event in carbon dioxide fixation, as well as the oxidative fragmentation of the pentose substrate in the photorespiration process. Both reactions occur simultaneously and in competition at the same active site. The sequence is that of Ribulose bisphosphate carboxylase large chain from Polystichum munitum (Western sword-fern).